Here is a 143-residue protein sequence, read N- to C-terminus: Transcription antitermination protein NusB (143 aa).

This sequence belongs to the NusB family.

Its function is as follows. Involved in transcription antitermination. Required for transcription of ribosomal RNA (rRNA) genes. Binds specifically to the boxA antiterminator sequence of the ribosomal RNA (rrn) operons. The sequence is that of Transcription antitermination protein NusB from Methylacidiphilum infernorum (isolate V4) (Methylokorus infernorum (strain V4)).